A 522-amino-acid polypeptide reads, in one-letter code: Na(+)/H(+) antiporter NhaB (522 aa).

The next 11 membrane-spanning stretches (helical) occupy residues 25–45 (VFLVINPFIFWFHPFIAGWLL), 49–69 (FIFTLAMALKCYPLQPGGMLA), 87–107 (ILANFEVILLLMFMVAGIYFM), 128–162 (LSLAFCLTAAFLSAFLDALTVIAVIISVAMGFYGV), 201–221 (LMMHAAVGTALGGVMTLVGEP), 237–257 (FFFRMSPVTLLTLISGVVTCI), 302–322 (VFVGIWLIIGLAFHLASVGLI), 356–376 (LVVFFSVVAVIIDQHLFAPVI), 388–408 (LLLFYIFNGVLSAISDNVFVA), 446–466 (ATPNGQAAFLFLLTSSISPLI), and 476–496 (MALPYTIVLSIVGLLAVEYVL).

Belongs to the NhaB Na(+)/H(+) (TC 2.A.34) antiporter family.

It is found in the cell inner membrane. It carries out the reaction 2 Na(+)(in) + 3 H(+)(out) = 2 Na(+)(out) + 3 H(+)(in). Functionally, na(+)/H(+) antiporter that extrudes sodium in exchange for external protons. This chain is Na(+)/H(+) antiporter NhaB, found in Actinobacillus succinogenes (strain ATCC 55618 / DSM 22257 / CCUG 43843 / 130Z).